The sequence spans 367 residues: Female-specific protein transformer (367 aa).

The tract at residues 86 to 280 (ESISSKKIKS…HRHHRSQERS (195 aa)) is disordered. The span at 109–129 (VKQNSPDVTQKFTKKYGSSEN) shows a compositional bias: polar residues. A compositionally biased stretch (basic and acidic residues) spans 130-144 (PDFRRHSSYEKDNYH). Residues 195 to 223 (NRRRSSHRSRRGSGSPRSRRYTSRHRRRS) show a composition bias toward basic residues. The span at 229–238 (TSWKHNPEHR) shows a compositional bias: basic and acidic residues. Over residues 239 to 257 (TSRRSRTRSPRGNRSRRRS) the composition is skewed to basic residues.

In terms of biological role, sex differentiation protein controlling female somatic sexual differentiation. May act by promoting the formation of a splicing enhancer complex. This chain is Female-specific protein transformer, found in Musca domestica (House fly).